The primary structure comprises 1131 residues: DNA polymerase II large subunit (1131 aa).

It belongs to the archaeal DNA polymerase II family. As to quaternary structure, heterodimer of a large subunit and a small subunit.

It carries out the reaction DNA(n) + a 2'-deoxyribonucleoside 5'-triphosphate = DNA(n+1) + diphosphate. The enzyme catalyses Exonucleolytic cleavage in the 3'- to 5'-direction to yield nucleoside 5'-phosphates.. Possesses two activities: a DNA synthesis (polymerase) and an exonucleolytic activity that degrades single-stranded DNA in the 3'- to 5'-direction. Has a template-primer preference which is characteristic of a replicative DNA polymerase. This is DNA polymerase II large subunit from Methanococcus maripaludis (strain C5 / ATCC BAA-1333).